A 194-amino-acid polypeptide reads, in one-letter code: AN1-type zinc finger protein 2A (194 aa).

2 consecutive AN1-type zinc fingers follow at residues 4-52 (PDLG…QKDV) and 94-142 (KIFT…RPTI). Residues Cys10, Cys15, Cys25, Cys28, Cys33, His36, His42, Cys44, Cys100, Cys105, Cys115, Cys118, Cys123, His126, His132, and Cys134 each coordinate Zn(2+). Residues 145-164 (GCSPVTASESKPSGDPHPGS) form a disordered region.

Its subcellular location is the cytoplasm. It localises to the nucleus. In Pongo abelii (Sumatran orangutan), this protein is AN1-type zinc finger protein 2A (ZFAND2A).